The following is a 500-amino-acid chain: Plexin domain-containing protein 1 (500 aa).

The signal sequence occupies residues 1-18; sequence MRGELWLLVLVLREAARA. Residues 19–426 are Extracellular-facing; the sequence is LSPQPGAGHD…TKGTPVHLGT (408 aa). Disordered stretches follow at residues 20–39 and 46–78; these read SPQPGAGHDEGPGSGWAAKG and RRARESPGHVSEPDRTQLSQDLGGGTLAMDTLP. Ser33 carries O-linked (Xyl...) (chondroitin sulfate) serine glycosylation. The segment covering 47–60 has biased composition (basic and acidic residues); it reads RARESPGHVSEPDR. N-linked (GlcNAc...) asparagine glycans are attached at residues Asn80 and Asn197. Residues 359–379 are disordered; that stretch reads FQDEDHDSASPDTSFSPYDGD. The span at 368–379 shows a compositional bias: polar residues; it reads SPDTSFSPYDGD. The helical transmembrane segment at 427 to 447 threads the bilayer; the sequence is IVGIVLAVLLVAAIILAGIYI. Residues 448 to 500 lie on the Cytoplasmic side of the membrane; that stretch reads NGHPTSNAALFFIERRPHHWPAMKFRSHPDHSTYAEVEPSGHEKEGFMEAEQC. The span at 479–494 shows a compositional bias: basic and acidic residues; the sequence is STYAEVEPSGHEKEGF. A disordered region spans residues 479–500; that stretch reads STYAEVEPSGHEKEGFMEAEQC.

It belongs to the plexin family. As to quaternary structure, interacts with NID1. May interact with CTTN. N-glycosylated. In terms of tissue distribution, detected in urine (at protein level). Detected in endothelial cells from colorectal cancer, and in endothelial cells from primary cancers of the lung, liver, pancreas, breast and brain. Not detectable in endothelial cells from normal tissue. Expressed in fibrovascular membrane with increased expression in individuals with proliferative diabetic retinopathy.

It localises to the secreted. Its subcellular location is the cell membrane. It is found in the cell junction. The protein resides in the tight junction. The protein localises to the cytoplasm. In terms of biological role, plays a critical role in endothelial cell capillary morphogenesis. This is Plexin domain-containing protein 1 (PLXDC1) from Homo sapiens (Human).